A 205-amino-acid chain; its full sequence is Dephospho-CoA kinase (205 aa).

The 191-residue stretch at 15–205 folds into the DPCK domain; the sequence is VIGLTGGIAT…VERALDQASI (191 aa). 23–28 is an ATP binding site; it reads ATGKST.

This sequence belongs to the CoaE family.

It localises to the cytoplasm. The catalysed reaction is 3'-dephospho-CoA + ATP = ADP + CoA + H(+). The protein operates within cofactor biosynthesis; coenzyme A biosynthesis; CoA from (R)-pantothenate: step 5/5. In terms of biological role, catalyzes the phosphorylation of the 3'-hydroxyl group of dephosphocoenzyme A to form coenzyme A. The sequence is that of Dephospho-CoA kinase from Gloeobacter violaceus (strain ATCC 29082 / PCC 7421).